The primary structure comprises 86 residues: Small ribosomal subunit protein bS20 (86 aa).

The interval 1-25 is disordered; it reads MANSASSRKRARQAVKRNKHNSQIR. The segment covering 7-25 has biased composition (basic residues); that stretch reads SRKRARQAVKRNKHNSQIR.

Belongs to the bacterial ribosomal protein bS20 family.

Its function is as follows. Binds directly to 16S ribosomal RNA. This chain is Small ribosomal subunit protein bS20, found in Vesicomyosocius okutanii subsp. Calyptogena okutanii (strain HA).